The primary structure comprises 105 residues: Large ribosomal subunit protein bL21 (105 aa).

This sequence belongs to the bacterial ribosomal protein bL21 family. As to quaternary structure, part of the 50S ribosomal subunit. Contacts protein L20.

This protein binds to 23S rRNA in the presence of protein L20. This is Large ribosomal subunit protein bL21 from Rhizobium etli (strain ATCC 51251 / DSM 11541 / JCM 21823 / NBRC 15573 / CFN 42).